Reading from the N-terminus, the 121-residue chain is Small ribosomal subunit protein uS13 (121 aa).

The disordered stretch occupies residues histidine 91–lysine 121.

It belongs to the universal ribosomal protein uS13 family. Part of the 30S ribosomal subunit. Forms a loose heterodimer with protein S19. Forms two bridges to the 50S subunit in the 70S ribosome.

Located at the top of the head of the 30S subunit, it contacts several helices of the 16S rRNA. In the 70S ribosome it contacts the 23S rRNA (bridge B1a) and protein L5 of the 50S subunit (bridge B1b), connecting the 2 subunits; these bridges are implicated in subunit movement. Contacts the tRNAs in the A and P-sites. The polypeptide is Small ribosomal subunit protein uS13 (Staphylococcus haemolyticus (strain JCSC1435)).